The following is a 351-amino-acid chain: tRNA-specific 2-thiouridylase MnmA (351 aa).

ATP-binding positions include Gly7–Ser14 and Leu33. Residue Cys94 is the Nucleophile of the active site. A disulfide bridge links Cys94 with Cys193. Residue Gly119 coordinates ATP. Residues Lys143–Gln145 are interaction with tRNA. Cys193 (cysteine persulfide intermediate) is an active-site residue. Positions Arg298–Tyr299 are interaction with tRNA.

It belongs to the MnmA/TRMU family.

Its subcellular location is the cytoplasm. The catalysed reaction is S-sulfanyl-L-cysteinyl-[protein] + uridine(34) in tRNA + AH2 + ATP = 2-thiouridine(34) in tRNA + L-cysteinyl-[protein] + A + AMP + diphosphate + H(+). Catalyzes the 2-thiolation of uridine at the wobble position (U34) of tRNA, leading to the formation of s(2)U34. This is tRNA-specific 2-thiouridylase MnmA from Nostoc punctiforme (strain ATCC 29133 / PCC 73102).